The sequence spans 85 residues: Large ribosomal subunit protein bL27 (85 aa).

Belongs to the bacterial ribosomal protein bL27 family.

In Campylobacter concisus (strain 13826), this protein is Large ribosomal subunit protein bL27.